Here is a 420-residue protein sequence, read N- to C-terminus: Vasopressin V1a receptor (420 aa).

The tract at residues 1–20 (MSFPRGSYDPAASNSSPWWP) is disordered. Residues 1–54 (MSFPRGSYDPAASNSSPWWPLSAEDANSSWEAAGHQKGSDPSGDVRNEELAKLE) lie on the Extracellular side of the membrane. A glycan (N-linked (GlcNAc...) asparagine) is linked at N27. A helical membrane pass occupies residues 55 to 75 (IAVLAVIFVVAVLGNSSVLLA). At 76-92 (LHRTPRKTSRMHLFIRH) the chain is on the cytoplasmic side. A helical membrane pass occupies residues 93 to 113 (LSLADLAVAFFQVLPQLCWDI). Over 114–125 (TYRFRGPDWLCR) the chain is Extracellular. An intrachain disulfide couples C124 to C205. Residues 126–146 (VVKHLQVFAMFASAYMLVVMT) traverse the membrane as a helical segment. Residues 147–168 (ADRYIAVCHPLKTLQQPTRRSR) are Cytoplasmic-facing. Residues 169–189 (LMIAASWVLSFLLSTPQYFIF) form a helical membrane-spanning segment. The Extracellular segment spans residues 190-225 (SMIEIEVNNGTKTQDCWATFIQPWGTRAYVTWMTSG). N-linked (GlcNAc...) asparagine glycosylation is present at N198. A helical transmembrane segment spans residues 226-246 (VFVVPVVILGTCYGFICYHIW). Residues 247–294 (RNVRGKTASRQSKGSGEDVAPFHKGLLVTPCVSSVKTISRAKIRTVKM) lie on the Cytoplasmic side of the membrane. A helical transmembrane segment spans residues 295-315 (TFVIVTAYILCWAPFFIVQMW). Residues 316–331 (SVWDDNFIWTDSENPS) are Extracellular-facing. A helical membrane pass occupies residues 332–352 (ITITALLASLNSCCNPWIYMF). Topologically, residues 353-420 (FSGHLLQDCV…RSIRFIPVST (68 aa)) are cytoplasmic. S-palmitoyl cysteine attachment occurs at residues C367 and C368. The segment at 379–411 (DSDNMSRRHTSYSNNRSPTNSTGTWKDSPKSSR) is disordered. Residues 389–403 (SYSNNRSPTNSTGTW) show a composition bias toward polar residues. S406 is modified (phosphoserine).

This sequence belongs to the G-protein coupled receptor 1 family. Vasopressin/oxytocin receptor subfamily.

Its subcellular location is the cell membrane. In terms of biological role, receptor for arginine vasopressin. The activity of this receptor is mediated by G proteins which activate a phosphatidyl-inositol-calcium second messenger system. Involved in social memory formation. This chain is Vasopressin V1a receptor (Avpr1a), found in Microtus ochrogaster (Prairie vole).